Here is a 154-residue protein sequence, read N- to C-terminus: MPIKKILLLNGPNLNLLGTREPHIYGYDTLASIESSLSTYLSSLTPSVELLTFQSNWEGALIDRIHEARTDGTDAIVINPAAFTHYSVALRDALTGVDIPFVEVHISNVHKREEFRHKSFLSDKAEAVICGLGVFGYRAAVEWCVGYLKERPKL.

The active-site Proton acceptor is the tyrosine 25. Substrate-binding residues include asparagine 79, histidine 85, and aspartate 92. Catalysis depends on histidine 105, which acts as the Proton donor. Substrate contacts are provided by residues 106-107 and arginine 116; that span reads IS.

Belongs to the type-II 3-dehydroquinase family. Homododecamer. Adopts a ring-like structure, composed of an arrangement of two hexameric rings stacked on top of one another.

It carries out the reaction 3-dehydroquinate = 3-dehydroshikimate + H2O. It functions in the pathway aromatic compound metabolism; 3,4-dihydroxybenzoate biosynthesis; 3,4-dihydroxybenzoate from 3-dehydroquinate: step 1/2. Functionally, is involved in the catabolism of quinate. Allows the utilization of quinate as carbon source via the beta-ketoadipate pathway. The chain is Catabolic 3-dehydroquinase from Sclerotinia sclerotiorum (strain ATCC 18683 / 1980 / Ss-1) (White mold).